The chain runs to 281 residues: Leukocyte antigen CD37 (281 aa).

The Cytoplasmic portion of the chain corresponds to M1–V17. A helical membrane pass occupies residues F18–I38. Topologically, residues D39–K59 are extracellular. A helical transmembrane segment spans residues V60–L74. At G75–C85 the chain is on the cytoplasmic side. The chain crosses the membrane as a helical span at residues L86–Q111. Topologically, residues R112–N241 are extracellular. Residues N170, N183, and N188 are each glycosylated (N-linked (GlcNAc...) asparagine). A helical membrane pass occupies residues I242–L266. At C267 to R281 the chain is on the cytoplasmic side.

The protein belongs to the tetraspanin (TM4SF) family. As to quaternary structure, interacts with SCIMP. Interacts with SOCS3. Interacts with DECTIN1/CLEC7A. Post-translationally, tyrosine phosphorylated; leading to activation of downstream signaling pathways.

Its subcellular location is the cell membrane. Its function is as follows. Structural component of specialized membrane microdomains known as tetraspanin-enriched microdomains (TERMs), which act as platforms for receptor clustering and signaling. Participates thereby in diverse biological functions such as cell signal transduction, adhesion, migration and protein trafficking. Upon ligand binding, two signaling pathways are activated, one acting through phosphorylation by LYN leading to cell death or a survival pathway with activation of GSK3B. Plays an essential role for clustering of integrin ITGA4/ITGB1 and promotes its mobility in the plasma membrane of B-cells. In turn, participates in ITGA4/ITGB1 integrin-mediated antiapoptotic signaling through AKT. Also plays a role in the migration of dendritic cells and neutrophils to draining lymph nodes, as well as in their integrin-mediated adhesion. Negatively regulates IL-6 responses through direct interaction with SOCS3 thereby preventing constitutive IL-6 signaling. Alternatively, inhibition of IL-6 signaling can also occur via interaction and stabilization of DECTIN1/CLEC7A at the cell membrane to inhibit its ability to promote the production of IL-6. The sequence is that of Leukocyte antigen CD37 (Cd37) from Mus musculus (Mouse).